A 104-amino-acid polypeptide reads, in one-letter code: BLOC-1-related complex subunit 7 (104 aa).

Belongs to the BORCS7 family.

It is found in the lysosome membrane. In terms of biological role, as part of a BORC-like complex may play a role in lysosomes movement and localization at the cell periphery. Associated with the cytosolic face of lysosomes, this complex may couple lysosomes to microtubule plus-end-directed kinesin motor. This chain is BLOC-1-related complex subunit 7, found in Xenopus tropicalis (Western clawed frog).